The chain runs to 50 residues: Protease inhibitor 2 (50 aa).

A Kazal-like domain is found at 2 to 50 (EDCVGRKACTREWYPVCGSDGVTYSNPCNFSAQQEQCDPNITIAHMGEC). Disulfide bonds link Cys10–Cys29 and Cys18–Cys50. 2 N-linked (GlcNAc...) asparagine glycosylation sites follow: Asn30 and Asn41.

Its function is as follows. Serine protease inhibitor. Strongly inhibits human neutrophil elastase and trypsin, also inhibits porcine pancreatic elastase and subtilisin A. Does not inhibit chymotrypsin, plasma kallikrein, pancreatic kallikrein, thrombin or papain. The polypeptide is Protease inhibitor 2 (Cenchritis muricatus (Beaded periwinkle)).